The following is a 185-amino-acid chain: Ribosome-recycling factor (185 aa).

This sequence belongs to the RRF family.

Its subcellular location is the cytoplasm. In terms of biological role, responsible for the release of ribosomes from messenger RNA at the termination of protein biosynthesis. May increase the efficiency of translation by recycling ribosomes from one round of translation to another. This Treponema denticola (strain ATCC 35405 / DSM 14222 / CIP 103919 / JCM 8153 / KCTC 15104) protein is Ribosome-recycling factor.